Consider the following 229-residue polypeptide: Peroxiredoxin-like 2A (229 aa).

Residues 14 to 112 (MWSIGVGAFG…DELGVPLYAV (99 aa)) are thioredoxin fold. Catalysis depends on redox-active residues C85 and C88.

Belongs to the peroxiredoxin-like PRXL2 family. PRXL2A subfamily. As to expression, expressed by the principal cells of the epididymis. Detected in the head region of epididymal sperm (at protein level). Expressed in bone marrow.

It is found in the cytoplasm. The protein localises to the secreted. In terms of biological role, involved in redox regulation of the cell. Acts as an antioxidant. Inhibits TNFSF11-induced NFKB1 and JUN activation and osteoclast differentiation. May affect bone resorption and help to maintain bone mass. Acts as a negative regulator of macrophage-mediated inflammation by inhibiting macrophage production of inflammatory cytokines, probably through suppression of the MAPK signaling pathway. This Rattus norvegicus (Rat) protein is Peroxiredoxin-like 2A.